Reading from the N-terminus, the 234-residue chain is Short neuropeptide F (234 aa).

A signal peptide spans 1-22 (MYRINLTTFTLLLVLAVGSLMS). The propeptide occupies 23–56 (ESLHPSDGAINDLYEYLLQREYAAPVSYADHQIK). A phenylalanine amide mark is found at phenylalanine 69 and phenylalanine 101. The residue at position 132 (tryptophan 132) is a Tryptophan amide. Position 165 is a phenylalanine amide (phenylalanine 165). Positions 181–190 (TTGQQAQPAN) are enriched in polar residues. The interval 181 to 234 (TTGQQAQPANEASEKRAPTQRLRWGRSDPALAKDSSEDKALDVEESENTNADDK) is disordered. At tryptophan 204 the chain carries Tryptophan amide. The propeptide occupies 207–234 (SDPALAKDSSEDKALDVEESENTNADDK).

The protein belongs to the NPY family. Expressed in all body parts of larva, pupae and adults.

The protein resides in the secreted. Its function is as follows. Plays a role in controlling food intake and regulating body size. The polypeptide is Short neuropeptide F (Anopheles gambiae (African malaria mosquito)).